The primary structure comprises 553 residues: CTP synthase (553 aa).

An amidoligase domain region spans residues 1-270; sequence MTKYVFVTGG…DRLICEELRL (270 aa). S13 contacts CTP. S13 lines the UTP pocket. Residues 14–19 and D71 each bind ATP; that span reads SLGKGI. Mg(2+) contacts are provided by D71 and E144. CTP contacts are provided by residues 151–153, 191–196, and K227; these read DIE and KTKPTQ. UTP contacts are provided by residues 191-196 and K227; that span reads KTKPTQ. In terms of domain architecture, Glutamine amidotransferase type-1 spans 295 to 547; it reads TIGMVGKYVD…VQAALACQQT (253 aa). G356 lines the L-glutamine pocket. The active-site Nucleophile; for glutamine hydrolysis is C383. L-glutamine contacts are provided by residues 384–387, E407, and R473; that span reads LGMQ. Residues H520 and E522 contribute to the active site.

Belongs to the CTP synthase family. In terms of assembly, homotetramer.

The enzyme catalyses UTP + L-glutamine + ATP + H2O = CTP + L-glutamate + ADP + phosphate + 2 H(+). It carries out the reaction L-glutamine + H2O = L-glutamate + NH4(+). The catalysed reaction is UTP + NH4(+) + ATP = CTP + ADP + phosphate + 2 H(+). It participates in pyrimidine metabolism; CTP biosynthesis via de novo pathway; CTP from UDP: step 2/2. Allosterically activated by GTP, when glutamine is the substrate; GTP has no effect on the reaction when ammonia is the substrate. The allosteric effector GTP functions by stabilizing the protein conformation that binds the tetrahedral intermediate(s) formed during glutamine hydrolysis. Inhibited by the product CTP, via allosteric rather than competitive inhibition. Its function is as follows. Catalyzes the ATP-dependent amination of UTP to CTP with either L-glutamine or ammonia as the source of nitrogen. Regulates intracellular CTP levels through interactions with the four ribonucleotide triphosphates. This chain is CTP synthase, found in Burkholderia mallei (strain NCTC 10229).